The sequence spans 466 residues: MKKFMDKDFLLENEVAKVLYHNYASKVPVFDYHCHLVPMEIATDHKFKNLTEMWLYHDHYKWRAMRSFGIDEEYITGNASDYDKFYQFAKMMPYLIGNPIYHWSHLELKRFFGVEETLSEKTASTIWEKCNKVIENNNLTAKKLIEMANVVYIGTTDDPIDDLRYHKQLKEDINFKCSVNPSFRPEKAMKIQNEGFKEYIGKLAEVSNVEIKSFDDLKKALEIRLDYFYENGCMITDHSLERVVFYKFSCEEINEIFIKALNGENINNEEASKYSVALLISLGKMYAERNMVMQLHIGALRNNNTRMFNRIGADAGFDSIDDGEIAYSLSRILDELDKEDKLPKTILYCLNPKDNEVLGTMIGNFQGGNIAGKIQFGSGWWFNDQKDGMERQMMALSQLGLISQFVGMVTDSRSFLSYTRHEYFRRILCNYLGNLVESGQYPYEEEILGEIVQNICYKNSAKYFKR.

It belongs to the metallo-dependent hydrolases superfamily. Uronate isomerase family.

The catalysed reaction is D-glucuronate = D-fructuronate. It carries out the reaction aldehydo-D-galacturonate = keto-D-tagaturonate. It participates in carbohydrate metabolism; pentose and glucuronate interconversion. The polypeptide is Uronate isomerase (Clostridium perfringens (strain 13 / Type A)).